We begin with the raw amino-acid sequence, 139 residues long: MSSYALYRGTTLGQALDKTLEDMESEGLLTKSLASKVLQQFDKSMNKQISRLPKEKMNFCATQLLTYRYCDNVWTFILNNVTLKDPQRSFDEPIDKLKVVACDGRQTSLLQTLSAQGPSKRVNRAHAAAAGDDEDDDSD.

Positions leucine 113–aspartate 139 are disordered.

This sequence belongs to the TFIIA subunit 2 family.

Its subcellular location is the nucleus. The chain is Transcription initiation factor IIA small chain homolog from Caenorhabditis elegans.